The following is a 513-amino-acid chain: GMP synthase [glutamine-hydrolyzing] (513 aa).

One can recognise a Glutamine amidotransferase type-1 domain in the interval 3–192 (TVVVLDYGSQ…VSKIAKMEKN (190 aa)). Cys-80 functions as the Nucleophile in the catalytic mechanism. Residues His-166 and Glu-168 contribute to the active site. The GMPS ATP-PPase domain maps to 193 to 388 (WEMKDFVSEK…LELPQSMINR (196 aa)). 220-226 (SGGVDSS) provides a ligand contact to ATP.

As to quaternary structure, homodimer.

It catalyses the reaction XMP + L-glutamine + ATP + H2O = GMP + L-glutamate + AMP + diphosphate + 2 H(+). Its pathway is purine metabolism; GMP biosynthesis; GMP from XMP (L-Gln route): step 1/1. Functionally, catalyzes the synthesis of GMP from XMP. This is GMP synthase [glutamine-hydrolyzing] from Thermosipho melanesiensis (strain DSM 12029 / CIP 104789 / BI429).